Here is a 197-residue protein sequence, read N- to C-terminus: uncharacterized protein (197 aa).

The interval 1–31 (MMHFRKKSSISNTSDHDGANRASDVKISEDD) is disordered. Phosphoserine is present on residues Ser11 and Ser23. The span at 14–31 (SDHDGANRASDVKISEDD) shows a compositional bias: basic and acidic residues. Glycyl lysine isopeptide (Lys-Gly) (interchain with G-Cter in ubiquitin) cross-links involve residues Lys26 and Lys32. The tract at residues 157-197 (VGGASSQMYGEQAVYQPQQHVQTEEKQKKKKKGLFGRMKKK) is disordered. Polar residues predominate over residues 158–177 (GGASSQMYGEQAVYQPQQHV). A compositionally biased stretch (basic residues) spans 184–197 (KKKKKGLFGRMKKK).

It to yeast YGR273c.

This is an uncharacterized protein from Saccharomyces cerevisiae (strain ATCC 204508 / S288c) (Baker's yeast).